The sequence spans 170 residues: Small ribosomal subunit protein eS7 (170 aa).

It belongs to the eukaryotic ribosomal protein eS7 family. Component of the small ribosomal subunit.

The protein localises to the cytoplasm. The sequence is that of Small ribosomal subunit protein eS7 (RPS7) from Encephalitozoon cuniculi (strain GB-M1) (Microsporidian parasite).